A 98-amino-acid chain; its full sequence is NADH-ubiquinone oxidoreductase chain 4L (98 aa).

3 helical membrane passes run 1 to 21 (MSMV…GLLM), 29 to 49 (SLLC…MVVL), and 61 to 81 (IILL…LVMV).

The protein belongs to the complex I subunit 4L family. In terms of assembly, core subunit of respiratory chain NADH dehydrogenase (Complex I) which is composed of 45 different subunits.

It is found in the mitochondrion inner membrane. It carries out the reaction a ubiquinone + NADH + 5 H(+)(in) = a ubiquinol + NAD(+) + 4 H(+)(out). Its function is as follows. Core subunit of the mitochondrial membrane respiratory chain NADH dehydrogenase (Complex I) which catalyzes electron transfer from NADH through the respiratory chain, using ubiquinone as an electron acceptor. Part of the enzyme membrane arm which is embedded in the lipid bilayer and involved in proton translocation. In Acinonyx jubatus (Cheetah), this protein is NADH-ubiquinone oxidoreductase chain 4L (MT-ND4L).